The sequence spans 504 residues: Cytochrome P450 3A2 (504 aa).

Cys-443 contacts heme.

Belongs to the cytochrome P450 family. Heme is required as a cofactor. In terms of tissue distribution, expressed in liver.

It is found in the endoplasmic reticulum membrane. It localises to the microsome membrane. It catalyses the reaction an organic molecule + reduced [NADPH--hemoprotein reductase] + O2 = an alcohol + oxidized [NADPH--hemoprotein reductase] + H2O + H(+). Functionally, cytochromes P450 are a group of heme-thiolate monooxygenases. In liver microsomes, this enzyme is involved in an NADPH-dependent electron transport pathway. It oxidizes a variety of structurally unrelated compounds, including steroids, fatty acids, and xenobiotics. The protein is Cytochrome P450 3A2 (Cyp3a2) of Rattus norvegicus (Rat).